Consider the following 146-residue polypeptide: Large ribosomal subunit protein uL15 (146 aa).

The segment covering 1-18 (MKLHELKPSEGSRKERNR) has biased composition (basic and acidic residues). Residues 1 to 57 (MKLHELKPSEGSRKERNRVGRGIGSGNGKTSGKGHKGQNARSGGGVRPGFEGGQMPL) are disordered. 2 stretches are compositionally biased toward gly residues: residues 21–31 (RGIGSGNGKTS) and 42–52 (SGGGVRPGFEG).

This sequence belongs to the universal ribosomal protein uL15 family. Part of the 50S ribosomal subunit.

Its function is as follows. Binds to the 23S rRNA. In Bacillus pumilus (strain SAFR-032), this protein is Large ribosomal subunit protein uL15.